We begin with the raw amino-acid sequence, 404 residues long: F-box protein At2g17036 (404 aa).

An F-box domain is found at 2-50; sequence MDWATLPKDLLDLISKCLESSFDLIQFRSVCSSWRSAAGPKRLLWAHNL.

This is F-box protein At2g17036 from Arabidopsis thaliana (Mouse-ear cress).